Reading from the N-terminus, the 588-residue chain is ustiloxin B cluster transcription factor ustR (588 aa).

The segment at residues Cys11 to Cys38 is a DNA-binding region (zn(2)-C6 fungal-type). Residues Arg68–Asn92 form a disordered region.

The protein resides in the nucleus. In terms of biological role, transcription factor that regulates the expression of the gene cluster that mediates the biosynthesis of ustiloxin B, an antimitotic tetrapeptide. This is ustiloxin B cluster transcription factor ustR from Aspergillus flavus (strain ATCC 200026 / FGSC A1120 / IAM 13836 / NRRL 3357 / JCM 12722 / SRRC 167).